Reading from the N-terminus, the 448-residue chain is tRNA modification GTPase MnmE (448 aa).

Residues Arg24, Glu81, and Lys120 each contribute to the (6S)-5-formyl-5,6,7,8-tetrahydrofolate site. The TrmE-type G domain maps to 216–373; sequence GLNVVLVGAP…LKRTLLREAG (158 aa). Asn226 contacts K(+). Residues 226-231, 245-251, and 270-273 each bind GTP; these read NVGKSS, TDIAGTT, and DTAG. Ser230 is a Mg(2+) binding site. K(+) is bound by residues Thr245, Ile247, and Thr250. Thr251 lines the Mg(2+) pocket. A (6S)-5-formyl-5,6,7,8-tetrahydrofolate-binding site is contributed by Lys448.

The protein belongs to the TRAFAC class TrmE-Era-EngA-EngB-Septin-like GTPase superfamily. TrmE GTPase family. In terms of assembly, homodimer. Heterotetramer of two MnmE and two MnmG subunits. K(+) serves as cofactor.

The protein resides in the cytoplasm. Functionally, exhibits a very high intrinsic GTPase hydrolysis rate. Involved in the addition of a carboxymethylaminomethyl (cmnm) group at the wobble position (U34) of certain tRNAs, forming tRNA-cmnm(5)s(2)U34. This chain is tRNA modification GTPase MnmE, found in Neisseria meningitidis serogroup C / serotype 2a (strain ATCC 700532 / DSM 15464 / FAM18).